A 119-amino-acid polypeptide reads, in one-letter code: Large ribosomal subunit protein uL18 (119 aa).

The protein belongs to the universal ribosomal protein uL18 family. Part of the 50S ribosomal subunit; part of the 5S rRNA/L5/L18/L25 subcomplex. Contacts the 5S and 23S rRNAs.

In terms of biological role, this is one of the proteins that bind and probably mediate the attachment of the 5S RNA into the large ribosomal subunit, where it forms part of the central protuberance. In Mycoplasmoides gallisepticum (strain R(low / passage 15 / clone 2)) (Mycoplasma gallisepticum), this protein is Large ribosomal subunit protein uL18.